We begin with the raw amino-acid sequence, 62 residues long: Large ribosomal subunit protein bL28 (62 aa).

The tract at residues 1–28 is disordered; sequence MARVCAITGRKARSGNSRSHAMNATKRK.

This sequence belongs to the bacterial ribosomal protein bL28 family.

This Bacillus cytotoxicus (strain DSM 22905 / CIP 110041 / 391-98 / NVH 391-98) protein is Large ribosomal subunit protein bL28.